The sequence spans 332 residues: Pyrroline-5-carboxylate reductase (332 aa).

This sequence belongs to the pyrroline-5-carboxylate reductase family.

It carries out the reaction L-proline + NADP(+) = (S)-1-pyrroline-5-carboxylate + NADPH + 2 H(+). The catalysed reaction is L-proline + NAD(+) = (S)-1-pyrroline-5-carboxylate + NADH + 2 H(+). It participates in amino-acid biosynthesis; L-proline biosynthesis; L-proline from L-glutamate 5-semialdehyde: step 1/1. This is Pyrroline-5-carboxylate reductase (pro-1) from Neurospora crassa (strain ATCC 24698 / 74-OR23-1A / CBS 708.71 / DSM 1257 / FGSC 987).